A 293-amino-acid polypeptide reads, in one-letter code: Tumor necrosis factor receptor type 1-associated DEATH domain protein (293 aa).

A Nuclear export signal motif is present at residues 156-171 (LRDDEVTQLEQQLQNS). The Death domain occupies 200–290 (TPADQQRFAA…SMAEIMLGIQ (91 aa)). A Nuclear localization signal motif is present at residues 216–229 (KRVGRALQKNCRAL).

Heterodimer with tnfrsf1a.

The protein resides in the nucleus. The protein localises to the cytoplasm. It localises to the cytoskeleton. Functionally, adapter molecule for tnfrsf1a that specifically associates with the cytoplasmic domain of activated tnfrsf1a mediating its interaction with fadd. The chain is Tumor necrosis factor receptor type 1-associated DEATH domain protein from Danio rerio (Zebrafish).